Consider the following 308-residue polypeptide: Porphobilinogen deaminase (308 aa).

S-(dipyrrolylmethanemethyl)cysteine is present on C240.

The protein belongs to the HMBS family. Monomer. Dipyrromethane is required as a cofactor.

The enzyme catalyses 4 porphobilinogen + H2O = hydroxymethylbilane + 4 NH4(+). It functions in the pathway porphyrin-containing compound metabolism; protoporphyrin-IX biosynthesis; coproporphyrinogen-III from 5-aminolevulinate: step 2/4. In terms of biological role, tetrapolymerization of the monopyrrole PBG into the hydroxymethylbilane pre-uroporphyrinogen in several discrete steps. The protein is Porphobilinogen deaminase of Laribacter hongkongensis (strain HLHK9).